The chain runs to 235 residues: Glutathione S-transferase 1 (235 aa).

The GST N-terminal domain maps to 36–113 (EKYTLTYFNG…LLGGRFGLLG (78 aa)). Glutathione-binding positions include Tyr-42, Trp-73, Lys-77, Val-85, and 97–98 (ES). A GST C-terminal domain is found at 115–235 (NDWEEAKIMA…WIKKRPKTYF (121 aa)).

It belongs to the GST superfamily. Homodimer.

The enzyme catalyses RX + glutathione = an S-substituted glutathione + a halide anion + H(+). The protein is Glutathione S-transferase 1 (GST1) of Onchocerca volvulus.